A 228-amino-acid polypeptide reads, in one-letter code: Large ribosomal subunit protein uL1 (228 aa).

This sequence belongs to the universal ribosomal protein uL1 family. Part of the 50S ribosomal subunit.

Its function is as follows. Binds directly to 23S rRNA. The L1 stalk is quite mobile in the ribosome, and is involved in E site tRNA release. Functionally, protein L1 is also a translational repressor protein, it controls the translation of the L11 operon by binding to its mRNA. This chain is Large ribosomal subunit protein uL1, found in Clavibacter sepedonicus (Clavibacter michiganensis subsp. sepedonicus).